An 885-amino-acid chain; its full sequence is Alanine--tRNA ligase (885 aa).

Positions 564, 568, 676, and 680 each coordinate Zn(2+).

The protein belongs to the class-II aminoacyl-tRNA synthetase family. Zn(2+) serves as cofactor.

The protein resides in the cytoplasm. It catalyses the reaction tRNA(Ala) + L-alanine + ATP = L-alanyl-tRNA(Ala) + AMP + diphosphate. Catalyzes the attachment of alanine to tRNA(Ala) in a two-step reaction: alanine is first activated by ATP to form Ala-AMP and then transferred to the acceptor end of tRNA(Ala). Also edits incorrectly charged Ser-tRNA(Ala) and Gly-tRNA(Ala) via its editing domain. This chain is Alanine--tRNA ligase, found in Brucella anthropi (strain ATCC 49188 / DSM 6882 / CCUG 24695 / JCM 21032 / LMG 3331 / NBRC 15819 / NCTC 12168 / Alc 37) (Ochrobactrum anthropi).